The primary structure comprises 415 residues: Serine hydroxymethyltransferase (415 aa).

(6S)-5,6,7,8-tetrahydrofolate-binding positions include L120 and 124-126; that span reads GHL. Residue K229 is modified to N6-(pyridoxal phosphate)lysine.

This sequence belongs to the SHMT family. As to quaternary structure, homodimer. Pyridoxal 5'-phosphate is required as a cofactor.

It localises to the cytoplasm. It carries out the reaction (6R)-5,10-methylene-5,6,7,8-tetrahydrofolate + glycine + H2O = (6S)-5,6,7,8-tetrahydrofolate + L-serine. The protein operates within one-carbon metabolism; tetrahydrofolate interconversion. It participates in amino-acid biosynthesis; glycine biosynthesis; glycine from L-serine: step 1/1. Catalyzes the reversible interconversion of serine and glycine with tetrahydrofolate (THF) serving as the one-carbon carrier. This reaction serves as the major source of one-carbon groups required for the biosynthesis of purines, thymidylate, methionine, and other important biomolecules. Also exhibits THF-independent aldolase activity toward beta-hydroxyamino acids, producing glycine and aldehydes, via a retro-aldol mechanism. This is Serine hydroxymethyltransferase from Desulforudis audaxviator (strain MP104C).